The chain runs to 249 residues: MGLPRPGLWLKRLWVLVQVAVEVAVGKVLMTLFPERVKQNILAMGQKTGIAQNPNFAQDSWIPTFFSTQYFWFVLKVRWQRLEDATEPGGLAPNCSVVRLSGQQCSVWDFMRGNRPLVLNFGSCTUPSFLSKFDQFKRLIQDFSSIADFLIIYIEEAHASDGWAFKNNVDIKNHRNLQDRLRAASLLLARSPQCPVVVDTMQNQSSQLYAALPERLYVLRQGRILYKGESGPWNYNPEEVRAVLEELHS.

The Extracellular portion of the chain corresponds to 1 to 12; the sequence is MGLPRPGLWLKR. A helical; Signal-anchor for type III membrane protein transmembrane segment spans residues 13–33; that stretch reads LWVLVQVAVEVAVGKVLMTLF. The Cytoplasmic segment spans residues 34-249; that stretch reads PERVKQNILA…VRAVLEELHS (216 aa). Residue selenocysteine 126 is part of the active site. Residue selenocysteine 126 is a non-standard amino acid, selenocysteine.

The protein belongs to the iodothyronine deiodinase family. Predominantly monomer. Can form homodimers but homodimerization is not essential for enzyme activity.

It localises to the cell membrane. The protein localises to the endoplasmic reticulum membrane. It is found in the basolateral cell membrane. The enzyme catalyses 3,3',5-triiodo-L-thyronine + iodide + A + H(+) = L-thyroxine + AH2. The catalysed reaction is 3,3',5'-triiodo-L-thyronine + iodide + A + H(+) = L-thyroxine + AH2. It catalyses the reaction 3,3'-diiodo-L-thyronine + iodide + A + H(+) = 3,3',5'-triiodo-L-thyronine + AH2. It carries out the reaction 3,3'-diiodo-L-thyronine + iodide + A + H(+) = 3,3',5-triiodo-L-thyronine + AH2. The enzyme catalyses 3'-iodo-L-thyronine + iodide + A + H(+) = 3',5'-diiodo-L-thyronine + AH2. The catalysed reaction is 3-iodo-L-thyronine + iodide + A + H(+) = 3,5-diiodo-L-thyronine + AH2. It catalyses the reaction 3-iodo-L-thyronine + iodide + A + H(+) = 3,3'-diiodo-L-thyronine + AH2. It carries out the reaction 3,3'-diiodothyronamine + iodide + A + H(+) = 3,3',5'-triiodothyronamine + AH2. The enzyme catalyses 3'-iodothyronamine + iodide + A + H(+) = 3',5'-diiodothyronamine + AH2. The catalysed reaction is 3-iodothyronamine + iodide + A + H(+) = 3,3'-diiodothyronamine + AH2. It catalyses the reaction 3,3'-diiodothyronamine + iodide + A + H(+) = 3,3',5-triiodothyronamine + AH2. It carries out the reaction 3-iodothyronamine + iodide + A + H(+) = 3,5-diiodothyronamine + AH2. The enzyme catalyses 3,3'-diiodo-L-thyronine sulfate + iodide + A + H(+) = 3,3',5'-triiodo-L-thyronine sulfate + AH2. The catalysed reaction is 3,3',5'-triiodo-L-thyronine sulfate + iodide + A + H(+) = L-thyroxine sulfate + AH2. It catalyses the reaction 3,3'-diiodo-L-thyronine sulfate + iodide + A + H(+) = 3,3',5-triiodo-L-thyronine sulfate + AH2. Plays a crucial role in the metabolism of thyroid hormones (TH) and has specific roles in TH activation and inactivation by deiodination. Catalyzes the deiodination of L-thyroxine (T4) to 3,5,3'-triiodothyronine (T3) via outer-ring deiodination (ORD) and of T4 to 3,3',5'-triiodothyronine (rT3) via inner-ring deiodination (IRD). Catalyzes the deiodiantion of rT3 to 3,3'-diiodothyronine (3,3'-T2) and 3',5'-diiodothyronine (3',5'-T2) to 3'-monoiodothyronine (3'-T1) via ORD. Catalyzes the deiodination of T3 to 3,3'-T2, 3,5-diiodothyronine (3,5-T2) to 3-monoiodothyronine (3-T1) and 3,3'-T2 to 3-T1 via IRD. Catalyzes the phenolic ring deiodinations of 3,3',5'-triiodothyronamine, 3',5'-diiodothyronamine and 3,3'-diiodothyronamine as well as tyrosyl ring deiodinations of 3,5,3'-triiodothyronamine and 3,5-diiodothyronamine. Catalyzes the deiodination of L-thyroxine sulfate and 3,3',5-triiodo-L-thyronine sulfate via IRD and of 3,3',5'-triiodo-L-thyronine sulfate via ORD. This is Type I iodothyronine deiodinase (DIO1) from Oryctolagus cuniculus (Rabbit).